Consider the following 202-residue polypeptide: MTRKSVLGEVREVQLAIQLIQLGARLQFLESEVGLSRERLIRLYKEIKGVSPPKGLLPFSTDWYMTWLANIHSSMFYNMYQFMKIHSDEEKVWILIKSYKLYLQQIAAQDSEPILDFTRAYTMVRFFDSDMLQLSTCCRCSGQFVAHAHDHKSGYVCVLCRPPSRAGKARGAKRGAEGEAGALGIEGMGFGVEAAPGGAGFH.

Cys-137, Cys-140, Cys-157, and Cys-160 together coordinate Zn(2+).

The protein belongs to the FlhC family. In terms of assembly, heterohexamer composed of two FlhC and four FlhD subunits. Each FlhC binds a FlhD dimer, forming a heterotrimer, and a hexamer assembles by dimerization of two heterotrimers. Zn(2+) is required as a cofactor.

It localises to the cytoplasm. Functions in complex with FlhD as a master transcriptional regulator that regulates transcription of several flagellar and non-flagellar operons by binding to their promoter region. Activates expression of class 2 flagellar genes, including fliA, which is a flagellum-specific sigma factor that turns on the class 3 genes. Also regulates genes whose products function in a variety of physiological pathways. The chain is Flagellar transcriptional regulator FlhC from Variovorax paradoxus (strain S110).